The chain runs to 103 residues: Large ribosomal subunit protein uL24 (103 aa).

It belongs to the universal ribosomal protein uL24 family. In terms of assembly, part of the 50S ribosomal subunit.

One of two assembly initiator proteins, it binds directly to the 5'-end of the 23S rRNA, where it nucleates assembly of the 50S subunit. In terms of biological role, one of the proteins that surrounds the polypeptide exit tunnel on the outside of the subunit. The protein is Large ribosomal subunit protein uL24 of Haemophilus ducreyi (strain 35000HP / ATCC 700724).